Here is a 221-residue protein sequence, read N- to C-terminus: Ependymin-2 (221 aa).

Positions 1 to 21 are cleaved as a signal peptide; sequence MQDFAFAALSIWLCLGATALA. 3 N-linked (GlcNAc...) asparagine glycosylation sites follow: N33, N73, and N97.

Belongs to the ependymin family. In terms of processing, binds calcium through the terminal sialic acids. EPDs are synthesized in the meninx and secreted in the cerebrospinal fluid.

Its subcellular location is the secreted. Functionally, may play a role in neural plasticity. May be involved during axon regeneration. The sequence is that of Ependymin-2 (epd2) from Oncorhynchus mykiss (Rainbow trout).